We begin with the raw amino-acid sequence, 451 residues long: Phosphoglucosamine mutase (451 aa).

The active-site Phosphoserine intermediate is the S101. The Mg(2+) site is built by S101, D240, D242, and D244. S101 bears the Phosphoserine mark.

This sequence belongs to the phosphohexose mutase family. Requires Mg(2+) as cofactor. Activated by phosphorylation.

It catalyses the reaction alpha-D-glucosamine 1-phosphate = D-glucosamine 6-phosphate. Catalyzes the conversion of glucosamine-6-phosphate to glucosamine-1-phosphate. This is Phosphoglucosamine mutase from Alkalilimnicola ehrlichii (strain ATCC BAA-1101 / DSM 17681 / MLHE-1).